The chain runs to 521 residues: Bifunctional purine biosynthesis protein PurH (521 aa).

In terms of domain architecture, MGS-like spans Met-1 to Val-147.

This sequence belongs to the PurH family.

The catalysed reaction is (6R)-10-formyltetrahydrofolate + 5-amino-1-(5-phospho-beta-D-ribosyl)imidazole-4-carboxamide = 5-formamido-1-(5-phospho-D-ribosyl)imidazole-4-carboxamide + (6S)-5,6,7,8-tetrahydrofolate. It catalyses the reaction IMP + H2O = 5-formamido-1-(5-phospho-D-ribosyl)imidazole-4-carboxamide. It functions in the pathway purine metabolism; IMP biosynthesis via de novo pathway; 5-formamido-1-(5-phospho-D-ribosyl)imidazole-4-carboxamide from 5-amino-1-(5-phospho-D-ribosyl)imidazole-4-carboxamide (10-formyl THF route): step 1/1. The protein operates within purine metabolism; IMP biosynthesis via de novo pathway; IMP from 5-formamido-1-(5-phospho-D-ribosyl)imidazole-4-carboxamide: step 1/1. The sequence is that of Bifunctional purine biosynthesis protein PurH from Geobacter metallireducens (strain ATCC 53774 / DSM 7210 / GS-15).